Consider the following 213-residue polypeptide: Nicolin-1 (213 aa).

As to quaternary structure, part of the neuronal tubulin polyglutamylase complex which contains TPGS1, TPGS2, TTLL1, LRRC49 and NICN1. In terms of tissue distribution, high expression level is found in brain, testis, liver and kidney. Weak expression in spleen, leukocytes, small intestine and colon.

It localises to the nucleus. This chain is Nicolin-1 (NICN1), found in Homo sapiens (Human).